The following is a 101-amino-acid chain: Chaperone modulatory protein CbpM (101 aa).

It belongs to the CbpM family.

Functionally, interacts with CbpA and inhibits both the DnaJ-like co-chaperone activity and the DNA binding activity of CbpA. Together with CbpA, modulates the activity of the DnaK chaperone system. Does not inhibit the co-chaperone activity of DnaJ. The protein is Chaperone modulatory protein CbpM of Escherichia coli O1:K1 / APEC.